The chain runs to 1059 residues: Cellulose synthase catalytic subunit A [UDP-forming] (1059 aa).

2 disordered regions span residues 1-159 (MDRN…RFDT) and 174-220 (MRQH…KHVA). Residues 15–36 (NNINSSGGSYNNSMNNSSNNIG) are compositionally biased toward low complexity. 2 stretches are compositionally biased toward polar residues: residues 40–57 (GNNQSSRNLKPKPSQSNL) and 142–154 (NSPSSEYGTTSGG). Low complexity predominate over residues 181 to 194 (QEQQQQQQQQQQQQ). Basic residues predominate over residues 204 to 219 (QKKKPSSMQLSKKKHV). 3 helical membrane passes run 246–266 (FSHAILQATMAVFLIWNIFYF), 280–300 (ITFSYSILFIIVEFISFLGSA), and 306–323 (FTNPCTFVLVVTLEQILA). The tract at residues 328-628 (KHPTVMMYVC…FLGLLDADQQ (301 aa)) is catalytic subdomain A. Residue aspartate 370 is part of the active site. Substrate is bound by residues aspartate 624 and aspartate 626. A catalytic subdomain B region spans residues 701–761 (QPLYDIGGIM…EQRKRWAQGA (61 aa)). Aspartate 717 is a catalytic residue. Helical transmembrane passes span 790 to 810 (IYPFLSPTAFFYGASPLIMSI) and 813 to 833 (VPIVVKDPIIFILVGMIPVMV). Positions 933 to 953 (DNAQESSGKHKAEQSFRTSNK) are disordered. Positions 939–953 (SGKHKAEQSFRTSNK) are enriched in basic and acidic residues. The next 3 helical transmembrane spans lie at 963–983 (LFLPNIILFVVNILAMMSAVL), 993–1013 (WLLVVVAGFSFSTLWHLWSFI), and 1035–1055 (IVLFLVLGFLVLLFVDVKVCI).

This sequence belongs to the glycosyltransferase 2 family. The cofactor is Mg(2+).

The protein localises to the membrane. It carries out the reaction [(1-&gt;4)-beta-D-glucosyl](n) + UDP-alpha-D-glucose = [(1-&gt;4)-beta-D-glucosyl](n+1) + UDP + H(+). Its pathway is glycan metabolism; amoeba cellulose biosynthesis. Catalytic subunit of cellulose synthase. It incorporates glucose from uridine 5'-diphosphate glucose (UDP-alpha-D-glucose) to cellulose (a (1-&gt;4)-beta-D-glucan), which is produced as an extracellular component for mechanical and chemical protection at the onset of the stalk formation, when the cells exhibit multicellular behavior during culmination. The polypeptide is Cellulose synthase catalytic subunit A [UDP-forming] (dcsA) (Dictyostelium discoideum (Social amoeba)).